A 44-amino-acid polypeptide reads, in one-letter code: MNELTLIDFYLCFLAFLLFLVLIMLIIFWFSLELQDIEEPCNKV.

A helical membrane pass occupies residues 9 to 29 (FYLCFLAFLLFLVLIMLIIFW).

The protein resides in the host membrane. The polypeptide is Non-structural protein 7b (Bat coronavirus Rp3/2004 (BtCoV/Rp3/2004)).